The following is a 321-amino-acid chain: Transcription factor ATOH8 (321 aa).

2 disordered regions span residues 59–193 and 203–222; these read GLRD…SSYS and HQDS…AASS. Pro residues predominate over residues 70–85; it reads VPVPVPVPVPVAPAVP. Residues 93 to 109 are compositionally biased toward basic and acidic residues; it reads AGERGGSRAPEVSDARK. Residues 121–132 show a composition bias toward pro residues; the sequence is LPTPPPPPPPAP. Residues 133 to 143 show a composition bias toward low complexity; the sequence is QSQAPGGPEAQ. The span at 160-186 shows a compositional bias: pro residues; it reads PARPAPSAPPAPPAPPESTVRPAPPTR. Residues 230–243 form a basic motif; degenerate region; it reads TRRLLANARERTRV. Residues 230–282 form the bHLH domain; the sequence is TRRLLANARERTRVHTISAAFEALRKQVPCYSYGQKLSKLAILRIACNYILSL. The segment at 244 to 282 is helix-loop-helix motif; that stretch reads HTISAAFEALRKQVPCYSYGQKLSKLAILRIACNYILSL.

Efficient DNA binding requires dimerization with another bHLH protein. Interacts with NEUROG3 and NEUROD1. Interacts with ZFPM2; mediates indirect interaction with GATA4. Forms a heterodimer with TCF3; repress transcription of TCF3 and TCF3/NEUROG3 dimer-induced transactivation of E box-dependent promoters. As to expression, expressed in lung, liver, kidney, heart and pancreas. Expressed in endothel of umbilical vessels.

The protein localises to the nucleus. The protein resides in the nucleus speckle. It is found in the cytoplasm. Its function is as follows. Transcription factor that binds a palindromic (canonical) core consensus DNA sequence 5'-CANNTG- 3' known as an E-box element, possibly as a heterodimer with other bHLH proteins. Regulates endothelial cell proliferation, migration and tube-like structures formation. Modulates endothelial cell differentiation through NOS3. May be implicated in specification and differentiation of neuronal cell lineages in the brain. May participate in kidney development and may be involved in podocyte differentiation. During early embryonic development is involved in tissue-specific differentiation processes that are dependent on class II bHLH factors and namely modulates the differentiation program initiated by the pro-endocrine factor NEUROG3. During myogenesis, may play a role during the transition of myoblasts from the proliferative phase to the differentiation phase. Positively regulates HAMP transcription in two ways, firstly by acting directly on the HAMP promoter via E-boxes binding and indirectly through increased phosphorylation of SMAD protein complex. Repress NEUROG3-dependent gene activation in a gene-specific manner through at least two mechanisms; requires only either the sequestering of a general partner such as TCF3 through heterodimerization, either also requires binding of the bHLH domain to DNA via a basic motif. In Homo sapiens (Human), this protein is Transcription factor ATOH8.